Consider the following 175-residue polypeptide: Ribosome maturation factor RimM (175 aa).

The 81-residue stretch at 95–175 (SEDEFYWREL…RIEVDWDPGF (81 aa)) folds into the PRC barrel domain.

The protein belongs to the RimM family. As to quaternary structure, binds ribosomal protein uS19.

The protein localises to the cytoplasm. Functionally, an accessory protein needed during the final step in the assembly of 30S ribosomal subunit, possibly for assembly of the head region. Essential for efficient processing of 16S rRNA. May be needed both before and after RbfA during the maturation of 16S rRNA. It has affinity for free ribosomal 30S subunits but not for 70S ribosomes. This is Ribosome maturation factor RimM from Aliivibrio fischeri (strain MJ11) (Vibrio fischeri).